We begin with the raw amino-acid sequence, 456 residues long: Divalent metal cation transporter MntH (456 aa).

11 helical membrane-spanning segments follow: residues 47–67 (ALSF…PGNW), 77–97 (FGYA…LLQA), 123–143 (AWPL…AEVI), 151–171 (LLFG…VLLV), 184–204 (ALII…IIMA), 227–247 (MLYI…LYLH), 276–296 (IALT…AASF), 316–336 (PLLG…CCGL), 369–389 (FVAI…GTTE), 392–412 (ILSQ…LVIF), and 422–442 (LAAA…IVVL).

It belongs to the NRAMP family.

It localises to the cell inner membrane. H(+)-stimulated, divalent metal cation uptake system. This is Divalent metal cation transporter MntH from Brucella suis biovar 1 (strain 1330).